The primary structure comprises 121 residues: MILSLNSPNVAVPTAKYIRMSPSKIQRVLNQIRGKSYKESLMILEFMPYAACKPVLQAVQSAGANAQHNKGINKNDLVVSLASVDNGPVLRRFRPRAQGRGFKIQKFTSHIRIGVQKQVNF.

It belongs to the universal ribosomal protein uL22 family. In terms of assembly, part of the 50S ribosomal subunit.

It localises to the plastid. It is found in the chloroplast. Its function is as follows. This protein binds specifically to 23S rRNA. The globular domain of the protein is located near the polypeptide exit tunnel on the outside of the subunit, while an extended beta-hairpin is found that lines the wall of the exit tunnel in the center of the 70S ribosome. In Guillardia theta (Cryptophyte), this protein is Large ribosomal subunit protein uL22c (rpl22).